The primary structure comprises 426 residues: MKQLRLEPVVQVRGEINIPGSKSISNRALLLATLAQGTTTLTNLLDSDDIRHMLASLKQLGVNYRLSQNNTVCELDGLGGVISSESAQELFLGNAGTAMRPLCAALTLGQGEFTLTCEPRMEERPIGDLVDALRQLGANVVYLKNDGFPPLTINATGLSGGDVEIAGDLSSQFLTALLMVAPLAKGSVNIHVKGELVSKPYIDITLALMAQFGVTVINHDYARFEIVAGQRYVSPGKVLVEGDASSASYFLAAGAIKGGEVKVTGVGRLSIQGDVKFADVLEKMGAEIEWGDDYIIARGSQLTAVDLDMNHIPDAAMTIATAALFAKGTTVIRNIYNWRIKETDRLAAMATELRKVGAEVEEGNDYIKITPPAVINTAEIDTYNDHRMAMCFSMLAFADCGITINDPDCTSKTFPDYFKQFASLQG.

3-phosphoshikimate is bound by residues lysine 22, serine 23, and arginine 27. Lysine 22 lines the phosphoenolpyruvate pocket. Positions 96 and 124 each coordinate phosphoenolpyruvate. Positions 170, 171, 172, 198, 314, 337, and 341 each coordinate 3-phosphoshikimate. Glutamine 172 contacts phosphoenolpyruvate. Aspartate 314 acts as the Proton acceptor in catalysis. Positions 345, 387, and 412 each coordinate phosphoenolpyruvate.

The protein belongs to the EPSP synthase family. As to quaternary structure, monomer.

Its subcellular location is the cytoplasm. It catalyses the reaction 3-phosphoshikimate + phosphoenolpyruvate = 5-O-(1-carboxyvinyl)-3-phosphoshikimate + phosphate. The protein operates within metabolic intermediate biosynthesis; chorismate biosynthesis; chorismate from D-erythrose 4-phosphate and phosphoenolpyruvate: step 6/7. Functionally, catalyzes the transfer of the enolpyruvyl moiety of phosphoenolpyruvate (PEP) to the 5-hydroxyl of shikimate-3-phosphate (S3P) to produce enolpyruvyl shikimate-3-phosphate and inorganic phosphate. The protein is 3-phosphoshikimate 1-carboxyvinyltransferase of Shewanella baltica (strain OS195).